Here is a 147-residue protein sequence, read N- to C-terminus: Thyrotropin subunit beta (147 aa).

The N-terminal stretch at 1–20 is a signal peptide; sequence MRVVLLASAVLCLLAGQVLS. Intrachain disulfides connect Cys-22-Cys-72, Cys-36-Cys-87, Cys-39-Cys-126, Cys-47-Cys-103, Cys-51-Cys-105, and Cys-108-Cys-115. The N-linked (GlcNAc...) asparagine glycan is linked to Asn-43.

It belongs to the glycoprotein hormones subunit beta family. Heterodimer of a common alpha chain and a unique beta chain which confers biological specificity to thyrotropin, lutropin, follitropin and gonadotropin.

It is found in the secreted. Functionally, indispensable for the control of thyroid structure and metabolism. May play some role in the biological processes of the immature fishes. The sequence is that of Thyrotropin subunit beta (tshb) from Anguilla anguilla (European freshwater eel).